The primary structure comprises 418 residues: Glutamyl-tRNA reductase (418 aa).

Residues 49–52 (TCNR), serine 109, 114–116 (EPQ), and glutamine 120 contribute to the substrate site. The Nucleophile role is filled by cysteine 50. Residue 189-194 (GAGETI) participates in NADP(+) binding.

It belongs to the glutamyl-tRNA reductase family. As to quaternary structure, homodimer.

The catalysed reaction is (S)-4-amino-5-oxopentanoate + tRNA(Glu) + NADP(+) = L-glutamyl-tRNA(Glu) + NADPH + H(+). It functions in the pathway porphyrin-containing compound metabolism; protoporphyrin-IX biosynthesis; 5-aminolevulinate from L-glutamyl-tRNA(Glu): step 1/2. Its function is as follows. Catalyzes the NADPH-dependent reduction of glutamyl-tRNA(Glu) to glutamate 1-semialdehyde (GSA). The polypeptide is Glutamyl-tRNA reductase (Escherichia coli O9:H4 (strain HS)).